We begin with the raw amino-acid sequence, 990 residues long: Nucleotide-binding leucine-rich repeat (NLR)-like protein (990 aa).

Positions Gly-22–Leu-304 are purine nucleoside phosphorylase domain. The NB-ARC domain maps to Arg-334–Glu-563. 6 TPR repeats span residues Arg-732–Ala-765, Ile-774–Val-807, Leu-816–Ala-849, Leu-858–Thr-891, Leu-900–Val-933, and Leu-942–Asp-975. The tract at residues Gln-965 to Lys-990 is disordered. Residues Lys-981 to Lys-990 are compositionally biased toward basic residues.

It carries out the reaction ATP + H2O = D-ribose 5-triphosphate + adenine. The enzyme catalyses dATP + H2O = 2-deoxyribose 5-triphosphate + adenine. The N-terminal purine nucleoside phosphorylase (PNP) domain cleaves the N-glycosidic bond of ATP, and to a lesser extent dATP; has very weak activity on adenosine and deoxyadenosine and no activity on (d)ADP or (d)AMP. The sequence is that of Nucleotide-binding leucine-rich repeat (NLR)-like protein from Hyaloscypha variabilis (strain UAMH 11265 / GT02V1 / F) (Meliniomyces variabilis).